A 352-amino-acid chain; its full sequence is Pheromone-regulated membrane protein 6 (352 aa).

The Extracellular segment spans residues 1–36 (MESSLQKLKFQDIDINLIPTAKWTTKLQYILYTWCQ). A helical membrane pass occupies residues 37–57 (SILHVAMFFSDIYTCIKLLAF). Topologically, residues 58-76 (NTWSNNIIQPFLEFRISKW) are cytoplasmic. A helical membrane pass occupies residues 77-97 (LFSGCILCSSLILIWELVIGL). Over 98–227 (RVYRKKEITS…VILSFMLFSF (130 aa)) the chain is Extracellular. A helical transmembrane segment spans residues 228–248 (IIWVILISKLILSIIIFIIFI). Residues 249–352 (RPRFLSSKRK…FPQKYKHKYI (104 aa)) are Cytoplasmic-facing.

It belongs to the KCH1 low affinity K(+) transporter family.

Its subcellular location is the cell membrane. The protein localises to the bud tip. The protein resides in the vacuole lumen. It catalyses the reaction K(+)(in) = K(+)(out). Functionally, low affinity potassium transporter that, with KCH1, participates in high-affinity Ca(2+) influx system (HACS) activation during the response to mating pheromone. Directly promotes K(+) influx and HACS may electrochemically respond to this K(+) influx. KCH1 and PRM6/KCH2 act at the apex of the calcium signaling pathway that is used for survival during prolonged exposures to mating pheromones. This is Pheromone-regulated membrane protein 6 from Saccharomyces cerevisiae (strain ATCC 204508 / S288c) (Baker's yeast).